Here is a 1166-residue protein sequence, read N- to C-terminus: Poly [ADP-ribose] polymerase tankyrase-2 (1166 aa).

ANK repeat units follow at residues 23–52, 57–86, 90–119, and 123–152; these read PSARELFEACRNGDVERVKRLVTPEKVNSR, RKSTPLHFAAGFGRKDVVEYLLQNGANVQA, GGLIPLHNACSFGHAEVVNLLLQHGADPNA, and WNYTPLHEAAIKGKIDVCIVLLQHGAEPTI. At Asn203 the chain carries (3S)-3-hydroxyasparagine; by HIF1AN. ANK repeat units lie at residues 210-239, 243-272, 276-305, 363-395, 399-428, 432-461, and 463-489; these read RKSTPLHLAAGYNRVKIVQLLLHHGADVHA, GDLVPLHNACSYGHYEVTELLVKHGACVNA, WQFTPLHEAASKNRIEVCSLLLSYGADPTL, THETALHCAAASPYPKRKQICELLLRKGANTNE, EFLTPLHVASENAHNDVVEVVVKHEAKVNA, LGQTSLHRAAHCGHLQTCRLLLSYGCDPNI, and SLQGFTALQMGNENVQQLLQEGASLGH. His238 carries the post-translational modification (3S)-3-hydroxyhistidine; by HIF1AN. Asn271 bears the (3S)-3-hydroxyasparagine; by HIF1AN mark. The residue at position 427 (Asn427) is a (3S)-3-hydroxyasparagine; by HIF1AN. Residue Asn518 is modified to (3S)-3-hydroxyasparagine; by HIF1AN. ANK repeat units follow at residues 525-554, 558-587, 591-620, and 624-652; these read RQSTPLHFAAGYNRVSVVEYLLQHGADVHA, GGLVPLHNACSYGHYEVAELLVKHGAVVNV, WKFTPLHEAAAKGKYEICKLLLQHGADPTK, and DGNTPLDLVKDGDTDIQDLLRGDAALLDA. The segment at 545–553 is HIF1AN-binding; sequence LLQHGADVH. Residue His553 is modified to (3S)-3-hydroxyhistidine; by HIF1AN. (3S)-3-hydroxyasparagine; by HIF1AN is present on Asn586. Residues Asn671, Asn706, and Asn739 each carry the (3S)-3-hydroxyasparagine; by HIF1AN modification. ANK repeat units lie at residues 678–707, 711–740, and 744–773; these read RHSTPLHLAAGYNNLEVAEYLLQHGADVNA, GGLIPLHNAASYGHVDVAALLIKYNACVNA, and WAFTPLHEAAQKGRTQLCALLLAHGADPTL. Residues 873-936 enclose the SAM domain; it reads GIDFSITQFI…IKGVERLISG (64 aa). The PARP catalytic domain maps to 959 to 1164; the sequence is SPDDKEFQSV…YQIVRPEGMV (206 aa). Zn(2+) contacts are provided by Cys1081, His1084, Cys1089, and Cys1092.

The protein belongs to the ARTD/PARP family. As to quaternary structure, oligomerizes and associates with TNKS. Interacts with the cytoplasmic domain of LNPEP/Otase in SLC2A4/GLUT4-vesicles. Binds to the N-terminus of Grb14 and TRF1 with its ankyrin repeat region. Interacts with HIF1AN. Interacts with RNF146; this interaction leads to ubiquitination and proteasomal degradation. Interacts with NUMA1. In terms of processing, ubiquitinated by RNF146 when auto-poly-ADP-ribosylated, leading to its degradation. Deubiquitinated by USP25; leading to stabilization. Post-translationally, ADP-ribosylated (-auto). Poly-ADP-ribosylated protein is recognized by RNF146, followed by ubiquitination.

Its subcellular location is the cytoplasm. The protein resides in the golgi apparatus membrane. It is found in the nucleus. The protein localises to the chromosome. It localises to the telomere. The catalysed reaction is NAD(+) + (ADP-D-ribosyl)n-acceptor = nicotinamide + (ADP-D-ribosyl)n+1-acceptor + H(+).. It carries out the reaction L-aspartyl-[protein] + NAD(+) = 4-O-(ADP-D-ribosyl)-L-aspartyl-[protein] + nicotinamide. The enzyme catalyses L-glutamyl-[protein] + NAD(+) = 5-O-(ADP-D-ribosyl)-L-glutamyl-[protein] + nicotinamide. In terms of biological role, poly-ADP-ribosyltransferase involved in various processes such as Wnt signaling pathway, telomere length and vesicle trafficking. Acts as an activator of the Wnt signaling pathway by mediating poly-ADP-ribosylation of AXIN1 and AXIN2, 2 key components of the beta-catenin destruction complex: poly-ADP-ribosylated target proteins are recognized by RNF146, which mediates their ubiquitination and subsequent degradation. Also mediates poly-ADP-ribosylation of BLZF1 and CASC3, followed by recruitment of RNF146 and subsequent ubiquitination. Mediates poly-ADP-ribosylation of TERF1, thereby contributing to the regulation of telomere length. Stimulates 26S proteasome activity. The polypeptide is Poly [ADP-ribose] polymerase tankyrase-2 (Mus musculus (Mouse)).